A 264-amino-acid polypeptide reads, in one-letter code: MAAAAVARLWWRGILGASALTRGTGRPSVLLLPVRRESAGADTRPTVRPRNDVAHKQLSAFGEYVAEILPKYVQQVQVSCFNELEVCIHPDGVIPVLTFLRDHTNAQFKSLVDLTAVDVPTRQNRFEIVYNLLSLRFNSRIRVKTYTDELTPIESAVSVFKAANWYEREIWDMFGVFFANHPDLRRILTDYGFEGHPFRKDFPLSGYVELRYDDEVKRVVAEPVELAQEFRKFDLNSPWEAFPVYRQPPESLKLEAGDKNLMPN.

A mitochondrion-targeting transit peptide spans 1–36 (MAAAAVARLWWRGILGASALTRGTGRPSVLLLPVRR).

The protein belongs to the complex I 30 kDa subunit family. As to quaternary structure, core subunit of respiratory chain NADH dehydrogenase (Complex I) which is composed of 45 different subunits. Interacts with NDUFAF3. Interacts with RAB5IF. Found in subcomplexes containing subunits NDUFS2, MT-ND1 and NDUFA13.

The protein resides in the mitochondrion inner membrane. The enzyme catalyses a ubiquinone + NADH + 5 H(+)(in) = a ubiquinol + NAD(+) + 4 H(+)(out). In terms of biological role, core subunit of the mitochondrial membrane respiratory chain NADH dehydrogenase (Complex I) which catalyzes electron transfer from NADH through the respiratory chain, using ubiquinone as an electron acceptor. Essential for the catalytic activity and assembly of complex I. The protein is NADH dehydrogenase [ubiquinone] iron-sulfur protein 3, mitochondrial (NDUFS3) of Pan troglodytes (Chimpanzee).